The chain runs to 30 residues: rRNA N-glycosylase (30 aa).

It belongs to the ribosome-inactivating protein family. Type 1 RIP subfamily. Expressed in seeds.

It catalyses the reaction Endohydrolysis of the N-glycosidic bond at one specific adenosine on the 28S rRNA.. Its function is as follows. Exhibits N-glycosylase activity. Catalyzes the release of one adenine from a ribosome. Acts as a ribosome-inactivating protein and inhibits protein synthesis in a rabbit-reticulocyte lysate system and in various cell lines (in vitro). The protein is rRNA N-glycosylase of Saponaria ocymoides (Rock soapwort).